The chain runs to 357 residues: Membrane-bound lytic murein transglycosylase C (357 aa).

Positions 1–16 are cleaved as a signal peptide; the sequence is MKKLLALFVIAPILIS. A lipid anchor (N-palmitoyl cysteine) is attached at Cys-17. Residue Cys-17 is the site of S-diacylglycerol cysteine attachment.

Belongs to the transglycosylase Slt family.

The protein localises to the cell outer membrane. The enzyme catalyses Exolytic cleavage of the (1-&gt;4)-beta-glycosidic linkage between N-acetylmuramic acid (MurNAc) and N-acetylglucosamine (GlcNAc) residues in peptidoglycan, from either the reducing or the non-reducing ends of the peptidoglycan chains, with concomitant formation of a 1,6-anhydrobond in the MurNAc residue.. In terms of biological role, murein-degrading enzyme. May play a role in recycling of muropeptides during cell elongation and/or cell division. The protein is Membrane-bound lytic murein transglycosylase C of Photorhabdus laumondii subsp. laumondii (strain DSM 15139 / CIP 105565 / TT01) (Photorhabdus luminescens subsp. laumondii).